Consider the following 198-residue polypeptide: Na(+)-translocating NADH-quinone reductase subunit E (198 aa).

A run of 6 helical transmembrane segments spans residues 11 to 31, 35 to 55, 77 to 97, 110 to 130, 140 to 160, and 176 to 196; these read AVFI…FLAV, VSPA…AVPV, FLNF…LEMV, GIFL…SFMV, IVYG…LAGL, and LGIT…FSGI.

Belongs to the NqrDE/RnfAE family. In terms of assembly, composed of six subunits; NqrA, NqrB, NqrC, NqrD, NqrE and NqrF.

The protein localises to the cell inner membrane. It carries out the reaction a ubiquinone + n Na(+)(in) + NADH + H(+) = a ubiquinol + n Na(+)(out) + NAD(+). Its function is as follows. NQR complex catalyzes the reduction of ubiquinone-1 to ubiquinol by two successive reactions, coupled with the transport of Na(+) ions from the cytoplasm to the periplasm. NqrA to NqrE are probably involved in the second step, the conversion of ubisemiquinone to ubiquinol. In Haemophilus influenzae (strain ATCC 51907 / DSM 11121 / KW20 / Rd), this protein is Na(+)-translocating NADH-quinone reductase subunit E.